We begin with the raw amino-acid sequence, 534 residues long: MSEVVAETARRRTFAIISHPDAGKTTLTEKLLLFGGAIQMAGSVKSRKAVRHATSDWMTLEKERGISVTSSVMQFPYEGKIINLLDTPGHADFGEDTYRVLTAVDSALMVIDVAKGVEERTIKLMEVCRLRDTPIMTFINKLDREGKNPIELLDEVERVLGIQCAPVTWPIGMGKRLRGVVNLLTNEVHLYEPGRNFTRQDSIIFTSLEAPGLAERIGEQMLADLHEELELIQGASACFDPTEYLGGRQTPVFFGSGVNNFGVQPLLDFFVEHAPSPQQRDTTSRVVLPTEEKLTGFVFKIQANMDPQHRDRVAFMRVCSGRFTAGMKAFHVRSSKDLKLANALTFMASDRESVAEAFPGDVIGIHNHGRVSIGDTFTEGEVLSFTGIPSFAPELFRRACLGDPLKLKQLQKGLTQLSEEGATQFFRPLMSNDLILGAVGMLQFDVVAYRLKNEYGVDATFEPVSITTARWVYCDNSKTLEEFREKNVTNLAVDASGELVYLAPTRVNLQLAQERAPEIHFFATREHAYAVGVD.

The tr-type G domain maps to 9–278 (ARRRTFAIIS…FFVEHAPSPQ (270 aa)). GTP-binding positions include 18 to 25 (SHPDAGKT), 86 to 90 (DTPGH), and 140 to 143 (NKLD).

The protein belongs to the TRAFAC class translation factor GTPase superfamily. Classic translation factor GTPase family. PrfC subfamily.

It is found in the cytoplasm. Its function is as follows. Increases the formation of ribosomal termination complexes and stimulates activities of RF-1 and RF-2. It binds guanine nucleotides and has strong preference for UGA stop codons. It may interact directly with the ribosome. The stimulation of RF-1 and RF-2 is significantly reduced by GTP and GDP, but not by GMP. In Xylella fastidiosa (strain M23), this protein is Peptide chain release factor 3.